Here is a 473-residue protein sequence, read N- to C-terminus: Ribulose bisphosphate carboxylase large chain (473 aa).

Positions 1–2 (MS) are excised as a propeptide. Pro-3 is subject to N-acetylproline. Lys-14 is modified (N6,N6,N6-trimethyllysine). Substrate is bound by residues Asn-123 and Thr-173. The active-site Proton acceptor is the Lys-175. Residue Lys-177 participates in substrate binding. Mg(2+)-binding residues include Lys-201, Asp-203, and Glu-204. Lys-201 is subject to N6-carboxylysine. Catalysis depends on His-294, which acts as the Proton acceptor. Substrate is bound by residues Arg-295, His-327, and Ser-379.

Belongs to the RuBisCO large chain family. Type I subfamily. In terms of assembly, heterohexadecamer of 8 large chains and 8 small chains; disulfide-linked. The disulfide link is formed within the large subunit homodimers. The cofactor is Mg(2+). The disulfide bond which can form in the large chain dimeric partners within the hexadecamer appears to be associated with oxidative stress and protein turnover.

Its subcellular location is the plastid. The protein resides in the chloroplast. The enzyme catalyses 2 (2R)-3-phosphoglycerate + 2 H(+) = D-ribulose 1,5-bisphosphate + CO2 + H2O. It carries out the reaction D-ribulose 1,5-bisphosphate + O2 = 2-phosphoglycolate + (2R)-3-phosphoglycerate + 2 H(+). Functionally, ruBisCO catalyzes two reactions: the carboxylation of D-ribulose 1,5-bisphosphate, the primary event in carbon dioxide fixation, as well as the oxidative fragmentation of the pentose substrate in the photorespiration process. Both reactions occur simultaneously and in competition at the same active site. The sequence is that of Ribulose bisphosphate carboxylase large chain from Vigna unguiculata (Cowpea).